Consider the following 338-residue polypeptide: Ornithine carbamoyltransferase (338 aa).

Carbamoyl phosphate-binding positions include 56-59 (STRT), Arg107, and 134-137 (HPTQ). L-ornithine is bound by residues Asn168, Asp232, and 236–237 (SM). Residues 274-275 (CL) and Arg320 contribute to the carbamoyl phosphate site.

It belongs to the aspartate/ornithine carbamoyltransferase superfamily. OTCase family.

Its subcellular location is the cytoplasm. It carries out the reaction carbamoyl phosphate + L-ornithine = L-citrulline + phosphate + H(+). It participates in amino-acid degradation; L-arginine degradation via ADI pathway; carbamoyl phosphate from L-arginine: step 2/2. In terms of biological role, reversibly catalyzes the transfer of the carbamoyl group from carbamoyl phosphate (CP) to the N(epsilon) atom of ornithine (ORN) to produce L-citrulline. The protein is Ornithine carbamoyltransferase of Buchnera aphidicola subsp. Acyrthosiphon pisum (strain 5A).